Reading from the N-terminus, the 242-residue chain is Zinc import ATP-binding protein ZnuC (242 aa).

The region spanning 24 to 241 (INVENLSFFY…EKFLKMFSSY (218 aa)) is the ABC transporter domain. ATP is bound at residue 56 to 63 (GPNGGGKT).

Belongs to the ABC transporter superfamily. Zinc importer (TC 3.A.1.15.5) family. As to quaternary structure, the complex is composed of two ATP-binding proteins (ZnuC), two transmembrane proteins (ZnuB) and a solute-binding protein (ZnuA).

The protein resides in the cell inner membrane. The enzyme catalyses Zn(2+)(out) + ATP(in) + H2O(in) = Zn(2+)(in) + ADP(in) + phosphate(in) + H(+)(in). Part of the ABC transporter complex ZnuABC involved in zinc import. Responsible for energy coupling to the transport system. The protein is Zinc import ATP-binding protein ZnuC of Ehrlichia chaffeensis (strain ATCC CRL-10679 / Arkansas).